Here is a 227-residue protein sequence, read N- to C-terminus: 7-cyano-7-deazaguanine synthase (227 aa).

11-21 (VSGGMDSAALL) is a binding site for ATP. Residues C192, C200, C203, and C206 each contribute to the Zn(2+) site.

Belongs to the QueC family. It depends on Zn(2+) as a cofactor.

The enzyme catalyses 7-carboxy-7-deazaguanine + NH4(+) + ATP = 7-cyano-7-deazaguanine + ADP + phosphate + H2O + H(+). It participates in purine metabolism; 7-cyano-7-deazaguanine biosynthesis. Functionally, catalyzes the ATP-dependent conversion of 7-carboxy-7-deazaguanine (CDG) to 7-cyano-7-deazaguanine (preQ(0)). The sequence is that of 7-cyano-7-deazaguanine synthase from Persephonella marina (strain DSM 14350 / EX-H1).